The following is a 155-amino-acid chain: Short-chain-enoyl-CoA hydratase (155 aa).

It belongs to the enoyl-CoA hydratase/isomerase family.

It catalyses the reaction a short-chain (3S)-3-hydroxyacyl-CoA = a short-chain (2E)-enoyl-CoA + H2O. Its pathway is lipid metabolism; butanoate metabolism. The protein is Short-chain-enoyl-CoA hydratase (crt) of Clostridioides difficile (Peptoclostridium difficile).